A 165-amino-acid polypeptide reads, in one-letter code: SsrA-binding protein (165 aa).

Positions 141-165 (KLHDKRQDEKRKQADREVKSALARY) are disordered. A compositionally biased stretch (basic and acidic residues) spans 145-159 (KRQDEKRKQADREVK).

The protein belongs to the SmpB family.

It is found in the cytoplasm. Required for rescue of stalled ribosomes mediated by trans-translation. Binds to transfer-messenger RNA (tmRNA), required for stable association of tmRNA with ribosomes. tmRNA and SmpB together mimic tRNA shape, replacing the anticodon stem-loop with SmpB. tmRNA is encoded by the ssrA gene; the 2 termini fold to resemble tRNA(Ala) and it encodes a 'tag peptide', a short internal open reading frame. During trans-translation Ala-aminoacylated tmRNA acts like a tRNA, entering the A-site of stalled ribosomes, displacing the stalled mRNA. The ribosome then switches to translate the ORF on the tmRNA; the nascent peptide is terminated with the 'tag peptide' encoded by the tmRNA and targeted for degradation. The ribosome is freed to recommence translation, which seems to be the essential function of trans-translation. The protein is SsrA-binding protein of Prochlorococcus marinus (strain MIT 9313).